The primary structure comprises 695 residues: Rho-related BTB domain-containing protein 1 (695 aa).

The tract at residues 1–210 is rho-like; sequence MDSDMDYERP…DNAIRAALIS (210 aa). Residues 21 to 28, 84 to 88, and 140 to 143 each bind GTP; these read GDNAVGKT, DTFGD, and CQLD. 2 consecutive BTB domains span residues 266-426 and 484-551; these read ADVL…DEKE and SDVT…SPNL. The disordered stretch occupies residues 325–351; the sequence is SLGSAEEGKEGPQRTPQADPGASSGQD.

It belongs to the small GTPase superfamily. Rho family. In terms of tissue distribution, highest expression in heart and testis.

The sequence is that of Rho-related BTB domain-containing protein 1 (Rhobtb1) from Mus musculus (Mouse).